The primary structure comprises 372 residues: Phenylalanine--tRNA ligase alpha subunit (372 aa).

Mg(2+) is bound at residue Glu-276.

Belongs to the class-II aminoacyl-tRNA synthetase family. Phe-tRNA synthetase alpha subunit type 1 subfamily. Tetramer of two alpha and two beta subunits. Mg(2+) is required as a cofactor.

The protein localises to the cytoplasm. It catalyses the reaction tRNA(Phe) + L-phenylalanine + ATP = L-phenylalanyl-tRNA(Phe) + AMP + diphosphate + H(+). The sequence is that of Phenylalanine--tRNA ligase alpha subunit from Thermobifida fusca (strain YX).